A 334-amino-acid polypeptide reads, in one-letter code: uncharacterized protein (334 aa).

Residue Tyr-52 is the Proton donor of the active site. The tract at residues 314–334 (LPPPASPNSEPQVTGGCSSMC) is disordered. The segment covering 320–334 (PNSEPQVTGGCSSMC) has biased composition (polar residues).

It belongs to the aldo/keto reductase family.

Its subcellular location is the cytoplasm. It localises to the nucleus. This is an uncharacterized protein from Schizosaccharomyces pombe (strain 972 / ATCC 24843) (Fission yeast).